Here is a 264-residue protein sequence, read N- to C-terminus: B3-hordein (264 aa).

The segment covering 1 to 15 has biased composition (low complexity); that stretch reads QQPVSRQPQQIIPQQ. A disordered region spans residues 1–66; the sequence is QQPVSRQPQQ…QQPFPQQPPF (66 aa). 2 stretches are compositionally biased toward pro residues: residues 16–44 and 52–64; these read PQQP…PYPQ and QPFP…PQQP.

This sequence belongs to the gliadin/glutenin family. Developing endosperm.

In terms of biological role, sulfur-rich seed storage protein. In Hordeum vulgare (Barley), this protein is B3-hordein.